The primary structure comprises 887 residues: Alanine--tRNA ligase (887 aa).

Zn(2+) contacts are provided by His581, His585, Cys683, and His687.

The protein belongs to the class-II aminoacyl-tRNA synthetase family. Requires Zn(2+) as cofactor.

The protein localises to the cytoplasm. The enzyme catalyses tRNA(Ala) + L-alanine + ATP = L-alanyl-tRNA(Ala) + AMP + diphosphate. Catalyzes the attachment of alanine to tRNA(Ala) in a two-step reaction: alanine is first activated by ATP to form Ala-AMP and then transferred to the acceptor end of tRNA(Ala). Also edits incorrectly charged Ser-tRNA(Ala) and Gly-tRNA(Ala) via its editing domain. This Ehrlichia chaffeensis (strain ATCC CRL-10679 / Arkansas) protein is Alanine--tRNA ligase.